A 150-amino-acid polypeptide reads, in one-letter code: MLGAALRRCAVAATTWAGPRGHLHSARTPGPAAAIQSVRCYSHGSQETDEEFDARWVTYFNKPDIDAWELRKGINTLVTYDMVPEPKIIDAALRACRRLNDFASTVRILEAVKDKAGPHKEIYPYVIQELRPTLNELGISTPEELGLDKV.

The N-terminal 41 residues, 1 to 41, are a transit peptide targeting the mitochondrion; the sequence is MLGAALRRCAVAATTWAGPRGHLHSARTPGPAAAIQSVRCY. Residues 2–17 carry the SIFI-degron motif; that stretch reads LGAALRRCAVAATTWA. N6-acetyllysine occurs at positions 87 and 113. The residue at position 141 (threonine 141) is a Phosphothreonine.

The protein belongs to the cytochrome c oxidase subunit 5A family. In terms of assembly, component of the cytochrome c oxidase (complex IV, CIV), a multisubunit enzyme composed of 14 subunits. The complex is composed of a catalytic core of 3 subunits MT-CO1, MT-CO2 and MT-CO3, encoded in the mitochondrial DNA, and 11 supernumerary subunits COX4I, COX5A, COX5B, COX6A, COX6B, COX6C, COX7A, COX7B, COX7C, COX8 and NDUFA4, which are encoded in the nuclear genome. The complex exists as a monomer or a dimer and forms supercomplexes (SCs) in the inner mitochondrial membrane with NADH-ubiquinone oxidoreductase (complex I, CI) and ubiquinol-cytochrome c oxidoreductase (cytochrome b-c1 complex, complex III, CIII), resulting in different assemblies (supercomplex SCI(1)III(2)IV(1) and megacomplex MCI(2)III(2)IV(2)). Interacts with AFG1L. Interacts with RAB5IF. Post-translationally, in response to mitochondrial stress, the precursor protein is ubiquitinated by the SIFI complex in the cytoplasm before mitochondrial import, leading to its degradation. Within the SIFI complex, UBR4 initiates ubiquitin chain that are further elongated or branched by KCMF1.

The protein resides in the mitochondrion inner membrane. It functions in the pathway energy metabolism; oxidative phosphorylation. Component of the cytochrome c oxidase, the last enzyme in the mitochondrial electron transport chain which drives oxidative phosphorylation. The respiratory chain contains 3 multisubunit complexes succinate dehydrogenase (complex II, CII), ubiquinol-cytochrome c oxidoreductase (cytochrome b-c1 complex, complex III, CIII) and cytochrome c oxidase (complex IV, CIV), that cooperate to transfer electrons derived from NADH and succinate to molecular oxygen, creating an electrochemical gradient over the inner membrane that drives transmembrane transport and the ATP synthase. Cytochrome c oxidase is the component of the respiratory chain that catalyzes the reduction of oxygen to water. Electrons originating from reduced cytochrome c in the intermembrane space (IMS) are transferred via the dinuclear copper A center (CU(A)) of subunit 2 and heme A of subunit 1 to the active site in subunit 1, a binuclear center (BNC) formed by heme A3 and copper B (CU(B)). The BNC reduces molecular oxygen to 2 water molecules using 4 electrons from cytochrome c in the IMS and 4 protons from the mitochondrial matrix. The chain is Cytochrome c oxidase subunit 5A, mitochondrial (COX5A) from Symphalangus syndactylus (Siamang).